The chain runs to 178 residues: Large ribosomal subunit protein uL10 (178 aa).

It belongs to the universal ribosomal protein uL10 family. As to quaternary structure, part of the ribosomal stalk of the 50S ribosomal subunit. The N-terminus interacts with L11 and the large rRNA to form the base of the stalk. The C-terminus forms an elongated spine to which L12 dimers bind in a sequential fashion forming a multimeric L10(L12)X complex.

In terms of biological role, forms part of the ribosomal stalk, playing a central role in the interaction of the ribosome with GTP-bound translation factors. This Petrotoga mobilis (strain DSM 10674 / SJ95) protein is Large ribosomal subunit protein uL10.